The sequence spans 65 residues: Large ribosomal subunit protein uL30 (65 aa).

It belongs to the universal ribosomal protein uL30 family. In terms of assembly, part of the 50S ribosomal subunit.

This chain is Large ribosomal subunit protein uL30, found in Methylobacillus flagellatus (strain ATCC 51484 / DSM 6875 / VKM B-1610 / KT).